A 128-amino-acid polypeptide reads, in one-letter code: Profilin (128 aa).

The protein belongs to the profilin family.

Functionally, more likely to influence phosphoinositide metabolism than actin assembly. The sequence is that of Profilin from Homo sapiens (Human).